Here is a 450-residue protein sequence, read N- to C-terminus: Divalent metal cation transporter MntH (450 aa).

11 consecutive transmembrane segments (helical) span residues 34–54, 61–81, 108–128, 141–161, 170–190, 212–232, 263–283, 305–325, 361–381, 383–403, and 422–442; these read LSFLGPGLLVAVGYMDPGNWI, AQYGYTLLFVILISSLSAMLL, IAIIFWIIAELAIIATDIAEV, IPLIVGALITVLDVFLLLFIM, AIVGTLIFTVLFIFIFEVYIS, GILYIALGIIGATIMPHNLYL, IQLSIAFVVNCLLLVLGASLF, PVLGATMGAIMSTLFAVALLA, SLAVIPVIVCLIIFKGNAAKI, QLLVFSQVFLSIALPFCLIPL, and VNIISWTLIIILSILNVYLIV.

The protein belongs to the NRAMP family.

The protein localises to the cell membrane. Functionally, h(+)-stimulated, divalent metal cation uptake system. The polypeptide is Divalent metal cation transporter MntH (Staphylococcus aureus (strain JH1)).